We begin with the raw amino-acid sequence, 363 residues long: Phospho-N-acetylmuramoyl-pentapeptide-transferase (363 aa).

Helical transmembrane passes span 27-47 (SGCA…PFIA), 76-96 (TMGG…WADL), 97-117 (TNGF…VGFA), 137-157 (LGCE…LTPP), 171-191 (VLLP…TGFG), 202-222 (GLAI…SYLV), 242-262 (LAVF…FNAP), 265-285 (AVFM…AVAV), 292-312 (VLCI…IQIF), and 340-360 (KIVI…LATL).

This sequence belongs to the glycosyltransferase 4 family. MraY subfamily. Mg(2+) serves as cofactor.

The protein resides in the cell inner membrane. It carries out the reaction UDP-N-acetyl-alpha-D-muramoyl-L-alanyl-gamma-D-glutamyl-meso-2,6-diaminopimeloyl-D-alanyl-D-alanine + di-trans,octa-cis-undecaprenyl phosphate = di-trans,octa-cis-undecaprenyl diphospho-N-acetyl-alpha-D-muramoyl-L-alanyl-D-glutamyl-meso-2,6-diaminopimeloyl-D-alanyl-D-alanine + UMP. The protein operates within cell wall biogenesis; peptidoglycan biosynthesis. Catalyzes the initial step of the lipid cycle reactions in the biosynthesis of the cell wall peptidoglycan: transfers peptidoglycan precursor phospho-MurNAc-pentapeptide from UDP-MurNAc-pentapeptide onto the lipid carrier undecaprenyl phosphate, yielding undecaprenyl-pyrophosphoryl-MurNAc-pentapeptide, known as lipid I. This Gluconobacter oxydans (strain 621H) (Gluconobacter suboxydans) protein is Phospho-N-acetylmuramoyl-pentapeptide-transferase.